The sequence spans 158 residues: Low molecular weight phosphotyrosine protein phosphatase (158 aa).

An N-acetylalanine modification is found at alanine 2. Residue cysteine 13 is the Nucleophile of the active site. The active site involves arginine 19. Aspartate 130 serves as the catalytic Proton donor. Tyrosine 132 and tyrosine 133 each carry phosphotyrosine.

It belongs to the low molecular weight phosphotyrosine protein phosphatase family. Interacts with EPHA2; dephosphorylates EPHA2. Interacts with EPHB1. In terms of assembly, interacts with the SH3 domain of SPTAN1. There is no interaction observed for isoforms 2 or 3. In terms of processing, phosphorylated by LCK. Phosphorylation at Tyr-132 increases its phosphatase activity. Post-translationally, not phosphorylated. As to expression, expressed in T-lymphocytes.

It localises to the cytoplasm. The enzyme catalyses O-phospho-L-tyrosyl-[protein] + H2O = L-tyrosyl-[protein] + phosphate. It carries out the reaction a phosphate monoester + H2O = an alcohol + phosphate. Inhibited by sulfhydryl reagents. Its function is as follows. Acts on tyrosine phosphorylated proteins, low-MW aryl phosphates and natural and synthetic acyl phosphates with differences in substrate specificity between isoform 1 and isoform 2. Functionally, does not possess phosphatase activity. The sequence is that of Low molecular weight phosphotyrosine protein phosphatase from Homo sapiens (Human).